We begin with the raw amino-acid sequence, 313 residues long: HPr kinase/phosphorylase (313 aa).

Active-site residues include H140 and K161. 155 to 162 contributes to the ATP binding site; that stretch reads GNSGAGKS. S162 provides a ligand contact to Mg(2+). D179 functions as the Proton acceptor; for phosphorylation activity. Proton donor; for dephosphorylation activity in the catalytic mechanism. Residues 203 to 212 are important for the catalytic mechanism of both phosphorylation and dephosphorylation; it reads IEVRGLGILN. E204 serves as a coordination point for Mg(2+). Residue R246 is part of the active site. The important for the catalytic mechanism of dephosphorylation stretch occupies residues 267–272; that stretch reads PVAAGR.

The protein belongs to the HPrK/P family. Homohexamer. Mg(2+) serves as cofactor.

The enzyme catalyses [HPr protein]-L-serine + ATP = [HPr protein]-O-phospho-L-serine + ADP + H(+). It catalyses the reaction [HPr protein]-O-phospho-L-serine + phosphate + H(+) = [HPr protein]-L-serine + diphosphate. Its function is as follows. Catalyzes the ATP- as well as the pyrophosphate-dependent phosphorylation of a specific serine residue in HPr, a phosphocarrier protein of the phosphoenolpyruvate-dependent sugar phosphotransferase system (PTS). HprK/P also catalyzes the pyrophosphate-producing, inorganic phosphate-dependent dephosphorylation (phosphorolysis) of seryl-phosphorylated HPr (P-Ser-HPr). This chain is HPr kinase/phosphorylase, found in Aromatoleum aromaticum (strain DSM 19018 / LMG 30748 / EbN1) (Azoarcus sp. (strain EbN1)).